Reading from the N-terminus, the 465-residue chain is Apolipoprotein N-acyltransferase (465 aa).

Transmembrane regions (helical) follow at residues 12 to 32, 49 to 69, 80 to 100, 122 to 142, 161 to 181, and 189 to 209; these read AVLGGLLAGLAPGVAGPLSML, ALWGLFGVLLSHRWLLGLHPL, LPVAVAIWLSCGVAAALLLLL, LLALVWGAAELLLEGSPLFWI, WLGSGGLATLQLLWGWGLWQL, and CAWWLISLLLAHAMGALSLSP. In terms of domain architecture, CN hydrolase spans 221 to 448; it reads WQPAIPTREK…DAVAAAELQR (228 aa). The active-site Proton acceptor is E262. K312 is a catalytic residue. The Nucleophile role is filled by C360.

The protein belongs to the CN hydrolase family. Apolipoprotein N-acyltransferase subfamily.

It localises to the cell inner membrane. It catalyses the reaction N-terminal S-1,2-diacyl-sn-glyceryl-L-cysteinyl-[lipoprotein] + a glycerophospholipid = N-acyl-S-1,2-diacyl-sn-glyceryl-L-cysteinyl-[lipoprotein] + a 2-acyl-sn-glycero-3-phospholipid + H(+). Its pathway is protein modification; lipoprotein biosynthesis (N-acyl transfer). In terms of biological role, catalyzes the phospholipid dependent N-acylation of the N-terminal cysteine of apolipoprotein, the last step in lipoprotein maturation. The polypeptide is Apolipoprotein N-acyltransferase (Parasynechococcus marenigrum (strain WH8102)).